A 181-amino-acid polypeptide reads, in one-letter code: Trafficking protein particle complex subunit 3-like protein (181 aa).

Cys-68 carries the S-palmitoyl cysteine lipid modification.

The protein belongs to the TRAPP small subunits family. BET3 subfamily. In terms of assembly, homodimer. Component of the multisubunit TRAPP (transport protein particle) complex, which includes at least TRAPPC2, TRAPPC2L, TRAPPC3, TRAPPC3L, TRAPPC4, TRAPPC5, TRAPPC8, TRAPPC9, TRAPPC10, TRAPPC11 and TRAPPC12.

It is found in the golgi apparatus. The protein localises to the cis-Golgi network. The protein resides in the endoplasmic reticulum. In terms of biological role, may play a role in vesicular transport from endoplasmic reticulum to Golgi. The protein is Trafficking protein particle complex subunit 3-like protein (TRAPPC3L) of Homo sapiens (Human).